We begin with the raw amino-acid sequence, 1214 residues long: Receptor-type guanylate cyclase gcy-19 (1214 aa).

Residues 1-18 (MEHLIFLLIFGGYSPSIA) form the signal peptide. Residues 19–517 (QITSSTTTTT…PQTFVDQYGA (499 aa)) are Extracellular-facing. N-linked (GlcNAc...) asparagine glycans are attached at residues asparagine 85, asparagine 363, asparagine 441, and asparagine 464. A helical transmembrane segment spans residues 518-538 (LVFSIGGVLALAMLFLITCFF). Residues 539–1214 (YVLRQRKLER…FRRQETLALM (676 aa)) are Cytoplasmic-facing. The Protein kinase domain occupies 572-859 (RMSKRSIQSG…KGNLMDHVFN (288 aa)). A Guanylate cyclase domain is found at 917–1047 (TVFFSDVVKF…DTVNTASRME (131 aa)). The disordered stretch occupies residues 1116–1197 (NSSNMAYNPE…EKAREIHNEE (82 aa)). The span at 1133–1142 (DDEDVDDESS) shows a compositional bias: acidic residues. Positions 1186–1197 (LEEKAREIHNEE) are enriched in basic and acidic residues.

It belongs to the adenylyl cyclase class-4/guanylyl cyclase family. In terms of tissue distribution, expressed asymmetrically in ASE right (ASER) sensory neuron.

It localises to the cell membrane. The catalysed reaction is GTP = 3',5'-cyclic GMP + diphosphate. Guanylate cyclase involved in the production of the second messenger cGMP. The polypeptide is Receptor-type guanylate cyclase gcy-19 (Caenorhabditis briggsae).